Here is a 211-residue protein sequence, read N- to C-terminus: Large ribosomal subunit protein bL25 (211 aa).

Residues 185-211 (ESTTPAATEGEETEAAAAAPEPAAEDK) form a disordered region. Over residues 199–211 (AAAAAPEPAAEDK) the composition is skewed to low complexity.

This sequence belongs to the bacterial ribosomal protein bL25 family. CTC subfamily. In terms of assembly, part of the 50S ribosomal subunit; part of the 5S rRNA/L5/L18/L25 subcomplex. Contacts the 5S rRNA. Binds to the 5S rRNA independently of L5 and L18.

Its function is as follows. This is one of the proteins that binds to the 5S RNA in the ribosome where it forms part of the central protuberance. This chain is Large ribosomal subunit protein bL25, found in Treponema denticola (strain ATCC 35405 / DSM 14222 / CIP 103919 / JCM 8153 / KCTC 15104).